The primary structure comprises 624 residues: Exocyst complex component EXO70B1 (624 aa).

The segment at 148-176 is disordered; it reads FGLNPQGDAGAMNHRFDSEEEEDDDRDFN.

The protein belongs to the EXO70 family. Interacts with EXO70B2, SEC5A and EXO84B. Binds to PUB18. Binds directly to B1L at the plasma membrane and in small vesicles. In terms of processing, target of the E3 ubiquitin-protein ligase PUB18 that mediates its ubiquitination and degradation via the 26S proteasome.

It is found in the cytoplasmic vesicle. The protein resides in the phagosome. It localises to the endomembrane system. Its subcellular location is the cell membrane. The protein localises to the vesicle. In terms of biological role, component of an exocyst subcomplex specifically involved in autophagy-related, Golgi-independent membrane traffic to the vacuole. Regulates autophagosome formation and autophagy-related Golgi-independent import into the vacuole. Positive regulator of both abscisic acid (ABA)-promoted and mannitol (drought)-promoted stomatal closure. Involved in the regulation of lateral root formation. This Arabidopsis thaliana (Mouse-ear cress) protein is Exocyst complex component EXO70B1.